The primary structure comprises 200 residues: COMM domain-containing protein 7 (200 aa).

Residues 133-200 (QLIDMEWRFG…RVRASMECLS (68 aa)) enclose the COMM domain.

It belongs to the COMM domain-containing protein 7 family. As to quaternary structure, component of the commander complex consisting of the CCC subcomplex and the retriever subcomplex. Component of the CCC (COMMD/CCDC22/CCDC93) subcomplex consisting of COMMD1, COMMD2, COMMD3, COMMD4, COMMD5, COMMD6, COMMD7, COMMD8, COMMD9, COMMD10, CCDC22 and CCDC93; within the complex forms a heterodimer with COMMD9. Interacts with RELA. Interacts with CCDC22, CCDC93, SCNN1B, CUL7.

The protein resides in the cytoplasmic vesicle. Functionally, scaffold protein in the commander complex that is essential for endosomal recycling of transmembrane cargos; the commander complex is composed of the CCC subcomplex and the retriever subcomplex. May modulate activity of cullin-RING E3 ubiquitin ligase (CRL) complexes. Associates with the NF-kappa-B complex and suppresses its transcriptional activity. This chain is COMM domain-containing protein 7 (Commd7), found in Mus musculus (Mouse).